We begin with the raw amino-acid sequence, 313 residues long: Porphobilinogen deaminase (313 aa).

Position 242 is an S-(dipyrrolylmethanemethyl)cysteine (Cys242).

Belongs to the HMBS family. As to quaternary structure, monomer. It depends on dipyrromethane as a cofactor.

The enzyme catalyses 4 porphobilinogen + H2O = hydroxymethylbilane + 4 NH4(+). It participates in porphyrin-containing compound metabolism; protoporphyrin-IX biosynthesis; coproporphyrinogen-III from 5-aminolevulinate: step 2/4. Functionally, tetrapolymerization of the monopyrrole PBG into the hydroxymethylbilane pre-uroporphyrinogen in several discrete steps. The sequence is that of Porphobilinogen deaminase from Escherichia coli O45:K1 (strain S88 / ExPEC).